Here is a 193-residue protein sequence, read N- to C-terminus: FMN-dependent NADH:quinone oxidoreductase (193 aa).

Residues Ser-9, 15-17, and 137-140 each bind FMN; these read SSS and TSGG.

This sequence belongs to the azoreductase type 1 family. Homodimer. FMN is required as a cofactor.

It carries out the reaction 2 a quinone + NADH + H(+) = 2 a 1,4-benzosemiquinone + NAD(+). The enzyme catalyses N,N-dimethyl-1,4-phenylenediamine + anthranilate + 2 NAD(+) = 2-(4-dimethylaminophenyl)diazenylbenzoate + 2 NADH + 2 H(+). Its function is as follows. Quinone reductase that provides resistance to thiol-specific stress caused by electrophilic quinones. Also exhibits azoreductase activity. Catalyzes the reductive cleavage of the azo bond in aromatic azo compounds to the corresponding amines. The polypeptide is FMN-dependent NADH:quinone oxidoreductase (Pelagibacter ubique (strain HTCC1062)).